The sequence spans 226 residues: Glutathione S-transferase-like protein gedE (226 aa).

The 82-residue stretch at 4–85 folds into the GST N-terminal domain; sequence LLPIKVWGQG…YLVERYDTAH (82 aa). The GST C-terminal domain occupies 92-226; the sequence is DTNDAQHARQ…VLSAVMPPPS (135 aa).

Belongs to the GST superfamily.

Its pathway is secondary metabolite biosynthesis. Glutathione S-transferase-like protein; part of the gene cluster that mediates the biosynthesis of geodin, an intermediate in the biosynthesis of other natural products. The pathway begins with the synthesis of atrochrysone thioester by the polyketide synthase (PKS) gedC. The atrochrysone carboxyl ACP thioesterase gedB then breaks the thioester bond and releases the atrochrysone carboxylic acid from gedC. The atrochrysone carboxylic acid is then converted to atrochrysone which is further transformed into emodinanthrone. The next step is performed by the emodinanthrone oxygenase gedH that catalyzes the oxidation of emodinanthrone to emodin. Emodin O-methyltransferase encoded probably by gedA then catalyzes methylation of the 8-hydroxy group of emodin to form questin. Ring cleavage of questin by questin oxidase gedK leads to desmethylsulochrin via several intermediates including questin epoxide. Another methylation step probably catalyzed by methyltransferase gedG leads to the formation of sulochrin which is further converted to dihydrogeodin by the sulochrin halogenase gedL. Finally, the dihydrogeodin oxidase gedJ catalyzes the stereospecific phenol oxidative coupling reaction converting dihydrogeodin to geodin. This chain is Glutathione S-transferase-like protein gedE, found in Aspergillus terreus (strain NIH 2624 / FGSC A1156).